Consider the following 386-residue polypeptide: GTPase Obg (386 aa).

The Obg domain occupies 4-162; the sequence is SNFVDYVKIY…RTVILQLKLL (159 aa). Positions 18–44 are disordered; sequence KGGRGSSHFRREKYIPKGGPDGGDGGR. The OBG-type G domain maps to 163–329; the sequence is ADVGLVGFPN…LKDLLWKELN (167 aa). GTP-binding positions include 169–176, 194–198, 216–219, 283–286, and 310–312; these read GFPNAGKS, FTTLE, DIPG, TKSD, and SSI. Mg(2+) is bound by residues serine 176 and threonine 196. The segment at 357-386 is disordered; sequence YIFPVDEDEDDPDEEYEEYWDDDEDEDTRK.

The protein belongs to the TRAFAC class OBG-HflX-like GTPase superfamily. OBG GTPase family. In terms of assembly, monomer. The cofactor is Mg(2+).

It is found in the cytoplasm. In terms of biological role, an essential GTPase which binds GTP, GDP and possibly (p)ppGpp with moderate affinity, with high nucleotide exchange rates and a fairly low GTP hydrolysis rate. Plays a role in control of the cell cycle, stress response, ribosome biogenesis and in those bacteria that undergo differentiation, in morphogenesis control. The polypeptide is GTPase Obg (Parabacteroides distasonis (strain ATCC 8503 / DSM 20701 / CIP 104284 / JCM 5825 / NCTC 11152)).